A 212-amino-acid chain; its full sequence is uncharacterized protein (212 aa).

One can recognise an SIS domain in the interval 46–198; sequence LERVYREKRK…IYSLMTRLGI (153 aa).

It belongs to the SIS family. PHI subfamily.

This is an uncharacterized protein from Aeropyrum pernix (strain ATCC 700893 / DSM 11879 / JCM 9820 / NBRC 100138 / K1).